A 296-amino-acid chain; its full sequence is Nucleotide-binding protein SZO_12220 (296 aa).

13-20 (GMSGAGKT) contributes to the ATP binding site. GTP is bound at residue 63-66 (DMRS).

The protein belongs to the RapZ-like family.

Displays ATPase and GTPase activities. This chain is Nucleotide-binding protein SZO_12220, found in Streptococcus equi subsp. zooepidemicus (strain H70).